The sequence spans 508 residues: Phytepsin (508 aa).

The signal sequence occupies residues 1–27; it reads MGTRGLALALLAAVLLLQTVLPAASEA. The propeptide at 28–66 is activation peptide; sequence EGLVRIALKKRPIDRNSRVATGLSGGEEQPLLSGANPLR. Residues 84 to 505 form the Peptidase A1 domain; it reads YFGEIGVGTP…DYGKLRIGFA (422 aa). The active site involves Asp102. Cystine bridges form between Cys115–Cys121 and Cys280–Cys284. Residue Asp289 is part of the active site. In terms of domain architecture, Saposin B-type spans 314–419; that stretch reads VVSQECKTIV…NQLCNRLPSP (106 aa). 4 disulfide bridges follow: Cys319/Cys413, Cys344/Cys385, Cys350/Cys382, and Cys427/Cys464. An N-linked (GlcNAc...) asparagine glycan is attached at Asn399.

Belongs to the peptidase A1 family. In terms of assembly, heterodimer of two subunits (29 kDa and 11 kDa) processed from the precursor molecule. A large enzyme (32 kDa and 16 kDa) is an intermediate precursor form. In terms of tissue distribution, embryo and leaf.

The protein localises to the vacuole. It catalyses the reaction Prefers hydrophobic residues Phe, Val, Ile, Leu, and Ala at P1 and P1', but also cleaves -Phe-|-Asp- and -Asp-|-Asp- bonds in 2S albumin from plant seeds.. Functionally, involved in the breakdown of propeptides of storage proteins in protein-storage vacuoles. The chain is Phytepsin from Hordeum vulgare (Barley).